A 156-amino-acid chain; its full sequence is Aspartate carbamoyltransferase regulatory chain (156 aa).

4 residues coordinate Zn(2+): cysteine 109, cysteine 114, cysteine 140, and cysteine 143.

It belongs to the PyrI family. As to quaternary structure, contains catalytic and regulatory chains. It depends on Zn(2+) as a cofactor.

Its function is as follows. Involved in allosteric regulation of aspartate carbamoyltransferase. The polypeptide is Aspartate carbamoyltransferase regulatory chain (Methanosarcina acetivorans (strain ATCC 35395 / DSM 2834 / JCM 12185 / C2A)).